The primary structure comprises 179 residues: Peptidyl-tRNA hydrolase (179 aa).

Tyr-15 serves as a coordination point for tRNA. His-20 acts as the Proton acceptor in catalysis. TRNA-binding residues include Tyr-66, Asn-68, and Asn-114.

The protein belongs to the PTH family. In terms of assembly, monomer.

The protein localises to the cytoplasm. It carries out the reaction an N-acyl-L-alpha-aminoacyl-tRNA + H2O = an N-acyl-L-amino acid + a tRNA + H(+). In terms of biological role, hydrolyzes ribosome-free peptidyl-tRNAs (with 1 or more amino acids incorporated), which drop off the ribosome during protein synthesis, or as a result of ribosome stalling. Functionally, catalyzes the release of premature peptidyl moieties from peptidyl-tRNA molecules trapped in stalled 50S ribosomal subunits, and thus maintains levels of free tRNAs and 50S ribosomes. In Chlamydia muridarum (strain MoPn / Nigg), this protein is Peptidyl-tRNA hydrolase.